The chain runs to 398 residues: S-adenosylmethionine synthase (398 aa).

His-17 is a binding site for ATP. Mg(2+) is bound at residue Asp-19. Position 45 (Glu-45) interacts with K(+). L-methionine contacts are provided by Glu-58 and Gln-101. Residues 101–111 (QSPDIAQGVDK) form a flexible loop region. Residues 176–178 (DGK), 243–244 (RF), Asp-252, 258–259 (RK), and Lys-279 contribute to the ATP site. Asp-252 is an L-methionine binding site. An L-methionine-binding site is contributed by Lys-283.

Belongs to the AdoMet synthase family. As to quaternary structure, homotetramer; dimer of dimers. It depends on Mg(2+) as a cofactor. Requires K(+) as cofactor.

It localises to the cytoplasm. The catalysed reaction is L-methionine + ATP + H2O = S-adenosyl-L-methionine + phosphate + diphosphate. It participates in amino-acid biosynthesis; S-adenosyl-L-methionine biosynthesis; S-adenosyl-L-methionine from L-methionine: step 1/1. In terms of biological role, catalyzes the formation of S-adenosylmethionine (AdoMet) from methionine and ATP. The overall synthetic reaction is composed of two sequential steps, AdoMet formation and the subsequent tripolyphosphate hydrolysis which occurs prior to release of AdoMet from the enzyme. The polypeptide is S-adenosylmethionine synthase (Staphylococcus aureus (strain Mu3 / ATCC 700698)).